Here is a 673-residue protein sequence, read N- to C-terminus: MACLLETPIRMSVLSEVTASSRHYVDRLFDPDPQKVLQGVIDMKNAVIGNNKQKANLIVLGAVPRLLYLLQQETSSTELKTECAVVLGSLAMGTENNVKSLLDCHIIPALLQGLLSPDLKFIEACLRCLRTIFTSPVTPEELLYTDATVIPHLMALLSRSRYTQEYICQIFSHCCKGPDHQTILFNHGAVQNIAHLLTSPSYKVRMQALKCFSVLAFENPQVSMTLVNVLVDGELLPQIFVKMLQRDKPIEMQLTSAKCLTYMCRAGAIRTDDSCIVLKTLPCLVRMCSKERLLEERVEGAETLAYLIEPDVELQRIASITDHLIAMLADYFKYPSSVSAITDIKRLDHDLKHAHELRQAAFKLYASLGANDEDIRKKIIETETMMDRIVTGSSESSVKVRLAAVRCLHSLSRSVQQLRTSFQDHAVWKPLMKVLQNAPDEILVVASSMLCNLLLEFSPSKEPILESGAVELLCGLTQSENPALRVNGIWALMNMAFQAEQKIKADILRSLSTEQLFRLLSDSDMNVLMKTLGLLRNLLSTRPHIDKIMSTHGKQIMQAVTLILEGEHSIEVKEQTLCILANIADGTTAKELIMTNDDILQKIKYYMGHSHVKLQLAAMFCISNLTWNEEEGSQERQDKLRDMGIVDILHKLSQSADSNLCDKAKTALQQYLA.

Ala2 carries the N-acetylalanine modification. 14 ARM repeats span residues 51 to 92 (NKQK…SLAM), 95 to 134 (ENNV…TIFT), 138 to 176 (TPEE…HCCK), 178 to 217 (PDHQ…VLAF), 224 to 265 (MTLV…YMCR), 269 to 309 (IRTD…YLIE), 313 to 352 (ELQR…HDLK), 374 to 413 (DIRK…SLSR), 416 to 455 (QQLR…NLLL), 458 to 497 (SPSK…NMAF), 501 to 540 (QKIK…NLLS), 543 to 585 (PHID…NIAD), 588 to 627 (TAKE…NLTW), and 634 to 673 (QERQ…QYLA). A Phosphoserine modification is found at Ser337. Ser512 is subject to Phosphoserine.

Identified in the CTLH complex that contains GID4, RANBP9 and/or RANBP10, MKLN1, MAEA, RMND5A (or alternatively its paralog RMND5B), GID8, ARMC8, WDR26 and YPEL5. Within this complex, MAEA, RMND5A (or alternatively its paralog RMND5B), GID8, WDR26, and RANBP9 and/or RANBP10 form the catalytic core, while GID4, MKLN1, ARMC8 and YPEL5 have ancillary roles.

Its subcellular location is the nucleus. The protein resides in the cytoplasm. Functionally, component of the CTLH E3 ubiquitin-protein ligase complex that selectively accepts ubiquitin from UBE2H and mediates ubiquitination and subsequent proteasomal degradation of the transcription factor HBP1. The chain is Armadillo repeat-containing protein 8 (Armc8) from Mus musculus (Mouse).